A 456-amino-acid chain; its full sequence is RuvB-like helicase 1 (456 aa).

70 to 77 is a binding site for ATP; the sequence is GPPGTGKT.

This sequence belongs to the RuvB family. Forms homohexameric rings. May form a dodecamer with rept made of two stacked hexameric rings. Component of the chromatin remodeling Ino80 complex. Interacts with Myc and rept. Higher expression occurs in primordia of mesoderm, anterior and posterior midgut and cephalic furrow early in gastrulation, as well as in endoderm and mesoderm lineages during germ band extension. Later in development expression is only maintained in endoderm cells. Expressed in thoracic and abdominal segment neural precursors of all embryonic chordotonal organs.

Its subcellular location is the nucleus. It catalyses the reaction ATP + H2O = ADP + phosphate + H(+). In terms of biological role, acts as a transcriptional coactivator in Wg signaling caused by altered arm signaling. Pont and rept interfere antagonistically with nuclear arm signaling function, and are required to enhance or reduce arm activity, respectively. Also an essential cofactor for the normal function of Myc; required for cellular proliferation and growth. Its function is as follows. Proposed core component of the chromatin remodeling Ino80 complex which is involved in transcriptional regulation, DNA replication and probably DNA repair. The sequence is that of RuvB-like helicase 1 from Drosophila melanogaster (Fruit fly).